Reading from the N-terminus, the 556-residue chain is Urocanate hydratase (556 aa).

Residues 52-53 (GG), glutamine 130, 176-178 (GMG), glutamate 196, arginine 201, 242-243 (NA), 263-267 (QTSAH), 273-274 (YL), and tyrosine 322 each bind NAD(+). Residue cysteine 410 is part of the active site. Glycine 492 lines the NAD(+) pocket.

It belongs to the urocanase family. NAD(+) is required as a cofactor.

It localises to the cytoplasm. It catalyses the reaction 4-imidazolone-5-propanoate = trans-urocanate + H2O. The protein operates within amino-acid degradation; L-histidine degradation into L-glutamate; N-formimidoyl-L-glutamate from L-histidine: step 2/3. Functionally, catalyzes the conversion of urocanate to 4-imidazolone-5-propionate. In Shewanella frigidimarina (strain NCIMB 400), this protein is Urocanate hydratase.